Here is a 344-residue protein sequence, read N- to C-terminus: C-C chemokine receptor-like 2 (344 aa).

Topologically, residues 1–43 are extracellular; the sequence is MANYTLAPEDEYDVLIEGELESDEAEQCDRYDTWALSAQLVPS. A glycan (N-linked (GlcNAc...) asparagine) is linked at Asn3. Residues 44–64 traverse the membrane as a helical segment; the sequence is LCSAVFVVGVLDNLLVVLILV. At 65-74 the chain is on the cytoplasmic side; that stretch reads KYKGLKRVEN. The helical transmembrane segment at 75–95 threads the bilayer; the sequence is IYLLNLAVSNLCFLLTLPFWA. Residues 96–104 are Extracellular-facing; the sequence is HAGGDPMCK. Cys103 and Cys181 are oxidised to a cystine. Residues 105–125 traverse the membrane as a helical segment; the sequence is ILIGLYFVGLYSETFFNCLLT. Residues 126 to 148 lie on the Cytoplasmic side of the membrane; the sequence is LQRYLVFLHKGNFFSVRRRVPCG. A helical transmembrane segment spans residues 149-169; the sequence is IVTSAVAWVTAILATVPEFAV. Topologically, residues 170–198 are extracellular; that stretch reads YKPQMEDPKYKCAFSRTPFLPADETFWKH. The helical transmembrane segment at 199–219 threads the bilayer; that stretch reads FLTLKMNVSVLVFPLFIFTFL. Residues 220 to 238 lie on the Cytoplasmic side of the membrane; the sequence is YVQMRKTLRFGEQRYSLFK. The chain crosses the membrane as a helical span at residues 239-259; sequence LVFAIMVVFLLMWAPYNIALF. Residues 260-281 lie on the Extracellular side of the membrane; sequence LSTFKEHFSLSDCKSNYNLDKS. A helical membrane pass occupies residues 282–302; sequence VLITKLIATTHCCVNPLLYVF. Topologically, residues 303–344 are cytoplasmic; it reads LDGTFRKYLCRFFHRRSNTPRQPRRRFAQGTSREEPDRSTEV. A disordered region spans residues 323 to 344; that stretch reads RQPRRRFAQGTSREEPDRSTEV. Positions 334 to 344 are enriched in basic and acidic residues; sequence SREEPDRSTEV.

It belongs to the G-protein coupled receptor 1 family.

The protein localises to the cell membrane. Receptor for CCL19 and chemerin/RARRES2. Does not appear to be a signaling receptor, but may have a role in modulating chemokine-triggered immune responses by capturing and internalizing CCL19 or by presenting RARRES2 ligand to CMKLR1, a functional signaling receptor. Plays a critical role for the development of Th2 responses. In Macaca mulatta (Rhesus macaque), this protein is C-C chemokine receptor-like 2 (CCRL2).